The following is a 185-amino-acid chain: Elongation factor P (185 aa).

This sequence belongs to the elongation factor P family.

It localises to the cytoplasm. It participates in protein biosynthesis; polypeptide chain elongation. Functionally, involved in peptide bond synthesis. Stimulates efficient translation and peptide-bond synthesis on native or reconstituted 70S ribosomes in vitro. Probably functions indirectly by altering the affinity of the ribosome for aminoacyl-tRNA, thus increasing their reactivity as acceptors for peptidyl transferase. The protein is Elongation factor P of Agathobacter rectalis (strain ATCC 33656 / DSM 3377 / JCM 17463 / KCTC 5835 / VPI 0990) (Eubacterium rectale).